The following is a 377-amino-acid chain: N-acetyldiaminopimelate deacetylase (377 aa).

Asp69 is a catalytic residue. The active-site Proton acceptor is Glu128.

It belongs to the peptidase M20A family. N-acetyldiaminopimelate deacetylase subfamily.

The catalysed reaction is N-acetyl-(2S,6S)-2,6-diaminopimelate + H2O = (2S,6S)-2,6-diaminopimelate + acetate. It participates in amino-acid biosynthesis; L-lysine biosynthesis via DAP pathway; LL-2,6-diaminopimelate from (S)-tetrahydrodipicolinate (acetylase route): step 3/3. Catalyzes the conversion of N-acetyl-diaminopimelate to diaminopimelate and acetate. The sequence is that of N-acetyldiaminopimelate deacetylase from Brevibacillus brevis (strain 47 / JCM 6285 / NBRC 100599).